Reading from the N-terminus, the 781-residue chain is Catalase-peroxidase (781 aa).

An N-terminal signal peptide occupies residues 1 to 20 (MLYIYYLFKSLFFHTLFVFS). The segment at residues 125–272 (WHSAGTYRIG…LAAVQMGLIY (148 aa)) is a cross-link (tryptophyl-tyrosyl-methioninium (Trp-Tyr) (with M-298)). The Proton acceptor role is filled by His-126. The segment at 237 to 256 (VHHPDEHRGAKEKAAKNSDS) is disordered. The tryptophyl-tyrosyl-methioninium (Tyr-Met) (with W-125) cross-link spans 272 to 298 (YVNPEGPDGRPDPLASARDIRETFARM). His-313 lines the heme b pocket. The segment at 317-336 (KTHGAAPADNVGPEPEAGEL) is disordered.

Belongs to the peroxidase family. Peroxidase/catalase subfamily. As to quaternary structure, homodimer or homotetramer. The cofactor is heme b. Formation of the three residue Trp-Tyr-Met cross-link is important for the catalase, but not the peroxidase activity of the enzyme.

The enzyme catalyses H2O2 + AH2 = A + 2 H2O. It catalyses the reaction 2 H2O2 = O2 + 2 H2O. Functionally, bifunctional enzyme with both catalase and broad-spectrum peroxidase activity. The sequence is that of Catalase-peroxidase from Xylella fastidiosa (strain 9a5c).